Here is a 1755-residue protein sequence, read N- to C-terminus: Transposon Ty1-DR6 Gag-Pol polyprotein (1755 aa).

3 stretches are compositionally biased toward polar residues: residues 1-23 (MESQQLSQHSPISHGSACASVTS), 48-60 (TKANSQQTTTPAS), and 127-152 (QSQFPQYPSSVGTPLSTPSPESGNTF). 3 disordered regions span residues 1–93 (MESQ…MMTQ), 126–174 (PQSQ…PPPM), and 352–421 (GSRN…SKST). Residues 153-165 (TDSSSADSDMTST) are compositionally biased toward low complexity. The segment at 299–401 (NNGIHINNKV…NSKSKTARAH (103 aa)) is RNA-binding. The span at 402–418 (NVSTSNNSPSTDNDSIS) shows a compositional bias: low complexity. At S416 the chain carries Phosphoserine. D461 functions as the For protease activity; shared with dimeric partner in the catalytic mechanism. An integrase-type zinc finger-like region spans residues 583 to 640 (NVHTSESTRKYPYPFIHRMLAHANAQTIRYSLKNNTITYFNESDVDWSSAIDYQCPDC). In terms of domain architecture, Integrase catalytic spans 660–835 (NSYEPFQYLH…AGLDISTLLP (176 aa)). 2 residues coordinate Mg(2+): D671 and D736. Disordered stretches follow at residues 956–1087 (SKAV…ETEK), 1092–1111 (RSPSIDASPPENNSSHNIVP), and 1130–1187 (DLPL…DNET). Positions 960–969 (SPTDSTPPST) are enriched in low complexity. Positions 1005 to 1015 (STPQISNIEST) are enriched in polar residues. Basic and acidic residues predominate over residues 1038 to 1053 (ESSHASKSKDFRHSDS). Polar residues-rich tracts occupy residues 1054 to 1082 (YSENETNHTNVPISSTGGTNNKTVPQISD) and 1101 to 1111 (PENNSSHNIVP). The Bipartite nuclear localization signal motif lies at 1178–1212 (KKRSLEDNETEIKVSRDTWNTKNMRSLEPPRSKKR). The Reverse transcriptase Ty1/copia-type domain maps to 1338 to 1476 (NNYYITQLDI…DILGLEIKYQ (139 aa)). 6 residues coordinate Mg(2+): D1346, D1427, D1428, D1610, E1652, and D1685. In terms of domain architecture, RNase H Ty1/copia-type spans 1610 to 1752 (DASYGNQPYY…IKTFKLLTNK (143 aa)).

The capsid protein forms a homotrimer, from which the VLPs are assembled. The protease is a homodimer, whose active site consists of two apposed aspartic acid residues. Initially, virus-like particles (VLPs) are composed of the structural unprocessed proteins Gag and Gag-Pol, and also contain the host initiator methionine tRNA (tRNA(i)-Met) which serves as a primer for minus-strand DNA synthesis, and a dimer of genomic Ty RNA. Processing of the polyproteins occurs within the particle and proceeds by an ordered pathway, called maturation. First, the protease (PR) is released by autocatalytic cleavage of the Gag-Pol polyprotein yielding capsid protein p45 and a Pol-p154 precursor protein. This cleavage is a prerequisite for subsequent processing of Pol-p154 at the remaining sites to release the mature structural and catalytic proteins. Maturation takes place prior to the RT reaction and is required to produce transposition-competent VLPs.

Its subcellular location is the cytoplasm. The protein localises to the nucleus. The catalysed reaction is DNA(n) + a 2'-deoxyribonucleoside 5'-triphosphate = DNA(n+1) + diphosphate. The enzyme catalyses Endonucleolytic cleavage to 5'-phosphomonoester.. Its function is as follows. Capsid protein (CA) is the structural component of the virus-like particle (VLP), forming the shell that encapsulates the retrotransposons dimeric RNA genome. The particles are assembled from trimer-clustered units and there are holes in the capsid shells that allow for the diffusion of macromolecules. CA also has nucleocapsid-like chaperone activity, promoting primer tRNA(i)-Met annealing to the multipartite primer-binding site (PBS), dimerization of Ty1 RNA and initiation of reverse transcription. Functionally, the aspartyl protease (PR) mediates the proteolytic cleavages of the Gag and Gag-Pol polyproteins after assembly of the VLP. Reverse transcriptase/ribonuclease H (RT) is a multifunctional enzyme that catalyzes the conversion of the retro-elements RNA genome into dsDNA within the VLP. The enzyme displays a DNA polymerase activity that can copy either DNA or RNA templates, and a ribonuclease H (RNase H) activity that cleaves the RNA strand of RNA-DNA heteroduplexes during plus-strand synthesis and hydrolyzes RNA primers. The conversion leads to a linear dsDNA copy of the retrotransposon that includes long terminal repeats (LTRs) at both ends. In terms of biological role, integrase (IN) targets the VLP to the nucleus, where a subparticle preintegration complex (PIC) containing at least integrase and the newly synthesized dsDNA copy of the retrotransposon must transit the nuclear membrane. Once in the nucleus, integrase performs the integration of the dsDNA into the host genome. The protein is Transposon Ty1-DR6 Gag-Pol polyprotein (TY1B-DR6) of Saccharomyces cerevisiae (strain ATCC 204508 / S288c) (Baker's yeast).